The primary structure comprises 170 residues: Adenine phosphoribosyltransferase (170 aa).

This sequence belongs to the purine/pyrimidine phosphoribosyltransferase family. As to quaternary structure, homodimer.

The protein localises to the cytoplasm. The enzyme catalyses AMP + diphosphate = 5-phospho-alpha-D-ribose 1-diphosphate + adenine. It participates in purine metabolism; AMP biosynthesis via salvage pathway; AMP from adenine: step 1/1. Its function is as follows. Catalyzes a salvage reaction resulting in the formation of AMP, that is energically less costly than de novo synthesis. This chain is Adenine phosphoribosyltransferase, found in Bacillus anthracis (strain A0248).